The primary structure comprises 547 residues: Glucose-6-phosphate isomerase (547 aa).

The Proton donor role is filled by Glu352. Catalysis depends on residues His383 and Lys511.

Belongs to the GPI family.

Its subcellular location is the cytoplasm. It carries out the reaction alpha-D-glucose 6-phosphate = beta-D-fructose 6-phosphate. It functions in the pathway carbohydrate biosynthesis; gluconeogenesis. It participates in carbohydrate degradation; glycolysis; D-glyceraldehyde 3-phosphate and glycerone phosphate from D-glucose: step 2/4. Functionally, catalyzes the reversible isomerization of glucose-6-phosphate to fructose-6-phosphate. This chain is Glucose-6-phosphate isomerase, found in Magnetococcus marinus (strain ATCC BAA-1437 / JCM 17883 / MC-1).